Consider the following 1934-residue polypeptide: Tudor domain-containing protein 15 (1934 aa).

Tudor domains follow at residues 59–117 (NVEI…LFEL), 289–347 (CDNF…FILV), 531–589 (KPEP…FCEL), 799–856 (PYEI…FLLL), 1011–1070 (DSNK…FPEL), and 1342–1401 (KPLV…FLTV). A disordered region spans residues 1490–1510 (VRPGDNEMKKGKSNESEGSMN). A compositionally biased stretch (basic and acidic residues) spans 1491–1504 (RPGDNEMKKGKSNE). 2 Tudor domains span residues 1574–1633 (SIEK…IRNI) and 1780–1838 (FIIP…PEEL).

This chain is Tudor domain-containing protein 15 (TDRD15), found in Homo sapiens (Human).